The chain runs to 392 residues: Phosphoglycerate kinase (392 aa).

Substrate is bound by residues 21-23, R36, 59-62, R118, and R151; these read DFN and HLGR. Residues K201, G292, E323, and 349–352 each bind ATP; that span reads GGDS.

This sequence belongs to the phosphoglycerate kinase family. Monomer.

Its subcellular location is the cytoplasm. The catalysed reaction is (2R)-3-phosphoglycerate + ATP = (2R)-3-phospho-glyceroyl phosphate + ADP. It participates in carbohydrate degradation; glycolysis; pyruvate from D-glyceraldehyde 3-phosphate: step 2/5. This Borrelia hermsii (strain HS1 / DAH) protein is Phosphoglycerate kinase.